A 368-amino-acid chain; its full sequence is Cystathionine beta-lyase (368 aa).

K221 is modified (N6-(pyridoxal phosphate)lysine).

Belongs to the class-II pyridoxal-phosphate-dependent aminotransferase family. MalY/PatB cystathionine beta-lyase subfamily. It depends on pyridoxal 5'-phosphate as a cofactor.

It carries out the reaction L,L-cystathionine + H2O = L-homocysteine + pyruvate + NH4(+). The enzyme catalyses an S-substituted L-cysteine + H2O = a thiol + pyruvate + NH4(+). The protein operates within amino-acid biosynthesis; L-methionine biosynthesis via de novo pathway; L-homocysteine from L-cystathionine: step 1/1. In terms of biological role, catalyzes the transformation of cystathionine to homocysteine. The polypeptide is Cystathionine beta-lyase (metC) (Corynebacterium glutamicum (Brevibacterium saccharolyticum)).